Reading from the N-terminus, the 811-residue chain is Probable potassium transporter 16 (811 aa).

At 1 to 66 the chain is on the cytoplasmic side; sequence MAQQQAGARG…GQESWMRTLR (66 aa). Residues 67–87 traverse the membrane as a helical segment; that stretch reads LGFQCVGILHADLGTSPLYVY. Residues 88-100 are Extracellular-facing; that stretch reads QNTFKYGIKHEDD. Residues 101-121 traverse the membrane as a helical segment; it reads IIGVLSLIIYSFVLFTMVKIV. Topologically, residues 122–190 are cytoplasmic; the sequence is FIALHANDDG…KSQLEKKPAK (69 aa). The chain crosses the membrane as a helical span at residues 191–211; it reads IAVFFLTIFATALAISDCVLN. Over 212–228 the chain is Extracellular; that stretch reads PSVSVLSAVNGLKLRAP. The helical transmembrane segment at 229 to 249 threads the bilayer; sequence HLTTDEVVWITVGILVVFFAV. At 250–256 the chain is on the cytoplasmic side; it reads QRFGTDK. The helical transmembrane segment at 257-277 threads the bilayer; the sequence is IGYTFAPVVVVWLLLISGIGI. At 278–310 the chain is on the extracellular side; that stretch reads YDLVKYDVGVLRAFNPKYIIDYFRRNKKDGWVQ. The helical transmembrane segment at 311–331 threads the bilayer; the sequence is LGEVLLTFTGTEALFADLGYF. Over 332-337 the chain is Cytoplasmic; sequence SIKSIQ. Residues 338-358 form a helical membrane-spanning segment; the sequence is LSSTFVLLPSVLCTYIGQAAY. Topologically, residues 359–379 are extracellular; the sequence is LRKHMDQQHIQNAFFNSIPRP. The helical transmembrane segment at 380 to 400 threads the bilayer; it reads LFWPMFVLAIMTSVIGCQAMV. The Cytoplasmic portion of the chain corresponds to 401–438; sequence SCAFATMSHLQTLNCFPRIKILHTSRRYSGQLYSPEVN. Residues 439 to 459 traverse the membrane as a helical segment; sequence FFLCLLSCVITLSFRTTGFIV. Residues 460-463 lie on the Extracellular side of the membrane; sequence KAHE. The helical transmembrane segment at 464–484 threads the bilayer; the sequence is ICVVLVMVITTILMTIVMLLV. Residues 485–488 are Cytoplasmic-facing; sequence WKVN. The chain crosses the membrane as a helical span at residues 489-509; the sequence is IWWIVLFFVVFMSTETVYLSA. The Extracellular segment spans residues 510–519; it reads VLYKFTKGPY. A helical transmembrane segment spans residues 520–540; sequence MPLAMSAVLMVIMFVWHYVHV. Over 541–811 the chain is Cytoplasmic; that stretch reads KRYKFELEHT…LLKVGITYEI (271 aa).

It belongs to the HAK/KUP transporter (TC 2.A.72.3) family.

It localises to the membrane. High-affinity potassium transporter. The chain is Probable potassium transporter 16 (HAK16) from Oryza sativa subsp. japonica (Rice).